We begin with the raw amino-acid sequence, 236 residues long: MEAHLIFGPTSTGKTSVAIALAKRTGFPVIVLDRIQCYSQLSVGGGRPSAAEFQGTRRIYLIEGSLDEGVISAERAHECLVAAVEAHKPEGGVILEGGSISLFKRMAQSSYWNCGFTWHVTRLHLGGEEIFLAAAKKRINQMMQPDEQGNSFLGELVSVWKTTALRATLEGICGYRYAIEFAGKQGLEMDALTSLNRRQLEQLVHGMAHEYLCYARQQEQELPLPSLAGGEGPPFQ.

The protein belongs to the isopentenyl transferase family.

It carries out the reaction dimethylallyl diphosphate + AMP = N(6)-(dimethylallyl)adenosine 5'-phosphate + diphosphate. In terms of biological role, transfers dimethylallyl groups to AMP as part of the biosynthesis of cytokinin phytohormones. The protein is Adenylate dimethylallyltransferase (ipt) of Allorhizobium ampelinum (strain ATCC BAA-846 / DSM 112012 / S4) (Agrobacterium vitis (strain S4)).